The primary structure comprises 110 residues: Eukaryotic translation initiation factor eIF1 (110 aa).

Thr40 carries the phosphothreonine modification.

Belongs to the SUI1 family.

Its function is as follows. Probably involved in translation. This is Eukaryotic translation initiation factor eIF1 from Drosophila melanogaster (Fruit fly).